The primary structure comprises 60 residues: Metallothionein B (60 aa).

Positions 1-28 (MDPCDCSKSGTCNCGGSCTCTNCSCTSC) are beta. Residues Cys-4, Cys-6, Cys-12, Cys-14, Cys-18, Cys-20, Cys-23, Cys-25, Cys-28, Cys-32, Cys-33, Cys-35, Cys-36, Cys-40, Cys-43, Cys-47, Cys-49, Cys-54, Cys-58, and Cys-59 each contribute to the a divalent metal cation site. Residues 29–60 (KKSCCPCCPSGCTKCASGCVCKGKTCDTSCCQ) are alpha.

This sequence belongs to the metallothionein superfamily. Type 1 family.

Functionally, metallothioneins have a high content of cysteine residues that bind various heavy metals. In Chionodraco hamatus (Antarctic teleost icefish), this protein is Metallothionein B (mtb).